The sequence spans 213 residues: Kynurenine formamidase (213 aa).

Trp18 contributes to the substrate binding site. Zn(2+)-binding residues include His48, His52, and Asp54. His58 (proton donor/acceptor) is an active-site residue. Zn(2+) is bound by residues His160 and Glu172.

Belongs to the Cyclase 1 superfamily. KynB family. As to quaternary structure, homodimer. Zn(2+) serves as cofactor.

It catalyses the reaction N-formyl-L-kynurenine + H2O = L-kynurenine + formate + H(+). It functions in the pathway amino-acid degradation; L-tryptophan degradation via kynurenine pathway; L-kynurenine from L-tryptophan: step 2/2. Its function is as follows. Catalyzes the hydrolysis of N-formyl-L-kynurenine to L-kynurenine, the second step in the kynurenine pathway of tryptophan degradation. The polypeptide is Kynurenine formamidase (Burkholderia multivorans (strain ATCC 17616 / 249)).